A 485-amino-acid chain; its full sequence is Glutamyl-tRNA(Gln) amidotransferase subunit A (485 aa).

Active-site charge relay system residues include lysine 79 and serine 154. The Acyl-ester intermediate role is filled by serine 178.

It belongs to the amidase family. GatA subfamily. As to quaternary structure, heterotrimer of A, B and C subunits.

The catalysed reaction is L-glutamyl-tRNA(Gln) + L-glutamine + ATP + H2O = L-glutaminyl-tRNA(Gln) + L-glutamate + ADP + phosphate + H(+). Allows the formation of correctly charged Gln-tRNA(Gln) through the transamidation of misacylated Glu-tRNA(Gln) in organisms which lack glutaminyl-tRNA synthetase. The reaction takes place in the presence of glutamine and ATP through an activated gamma-phospho-Glu-tRNA(Gln). The chain is Glutamyl-tRNA(Gln) amidotransferase subunit A from Clostridium botulinum (strain Kyoto / Type A2).